A 387-amino-acid polypeptide reads, in one-letter code: Succinyl-diaminopimelate desuccinylase (387 aa).

His74 is a Zn(2+) binding site. Asp76 is a catalytic residue. Asp107 serves as a coordination point for Zn(2+). Glu142 serves as the catalytic Proton acceptor. Zn(2+) contacts are provided by Glu143, Glu171, and His360.

It belongs to the peptidase M20A family. DapE subfamily. As to quaternary structure, homodimer. Zn(2+) is required as a cofactor. It depends on Co(2+) as a cofactor.

The catalysed reaction is N-succinyl-(2S,6S)-2,6-diaminopimelate + H2O = (2S,6S)-2,6-diaminopimelate + succinate. It functions in the pathway amino-acid biosynthesis; L-lysine biosynthesis via DAP pathway; LL-2,6-diaminopimelate from (S)-tetrahydrodipicolinate (succinylase route): step 3/3. Functionally, catalyzes the hydrolysis of N-succinyl-L,L-diaminopimelic acid (SDAP), forming succinate and LL-2,6-diaminopimelate (DAP), an intermediate involved in the bacterial biosynthesis of lysine and meso-diaminopimelic acid, an essential component of bacterial cell walls. This is Succinyl-diaminopimelate desuccinylase from Rhodopseudomonas palustris (strain BisA53).